Reading from the N-terminus, the 340-residue chain is Cytochrome c oxidase subunit 1 (340 aa).

A helical membrane pass occupies residues 18-38 (MCYLLVAILCGFLGYIYSLFI). The Ca(2+) site is built by glutamate 41 and glycine 46. The helical transmembrane segment at 42-62 (LSIIGCGVLFGDYQYYNVLVT) threads the bilayer. Position 64 (histidine 64) interacts with Fe(II)-heme a. A run of 7 helical transmembrane segments spans residues 66–86 (LVMVFAFIMPVMMGGLVNYFV), 100–120 (LNNMSFWMFMGGFGALVSGLL), 148–168 (FTVFAVHLLGVSSILNSINLL), 186–206 (LFIWGSLITALLLIITLPVLA), 237–257 (LFWFFGHPEVYIIIIPVFGLI), 279–299 (MILIAILGFFVWAHHMFVVGM), and 305–325 (AYFGSVTVLIGLPTCIKLFNW). Histidine 243 is a binding site for Cu cation. Positions 243 to 247 (HPEVY) form a cross-link, 1'-histidyl-3'-tyrosine (His-Tyr). Tyrosine 247 contributes to the O2 binding site. 2 residues coordinate Cu cation: histidine 292 and histidine 293.

This sequence belongs to the heme-copper respiratory oxidase family. As to quaternary structure, component of the cytochrome c oxidase (complex IV, CIV), a multisubunit enzyme composed of a catalytic core of 3 subunits and several supernumerary subunits. The complex exists as a monomer or a dimer and forms supercomplexes (SCs) in the inner mitochondrial membrane with ubiquinol-cytochrome c oxidoreductase (cytochrome b-c1 complex, complex III, CIII). Heme is required as a cofactor. The cofactor is Cu cation.

The protein localises to the mitochondrion inner membrane. It catalyses the reaction 4 Fe(II)-[cytochrome c] + O2 + 8 H(+)(in) = 4 Fe(III)-[cytochrome c] + 2 H2O + 4 H(+)(out). Its pathway is energy metabolism; oxidative phosphorylation. Component of the cytochrome c oxidase, the last enzyme in the mitochondrial electron transport chain which drives oxidative phosphorylation. The respiratory chain contains 3 multisubunit complexes succinate dehydrogenase (complex II, CII), ubiquinol-cytochrome c oxidoreductase (cytochrome b-c1 complex, complex III, CIII) and cytochrome c oxidase (complex IV, CIV), that cooperate to transfer electrons derived from NADH and succinate to molecular oxygen, creating an electrochemical gradient over the inner membrane that drives transmembrane transport and the ATP synthase. Cytochrome c oxidase is the component of the respiratory chain that catalyzes the reduction of oxygen to water. Electrons originating from reduced cytochrome c in the intermembrane space (IMS) are transferred via the dinuclear copper A center (CU(A)) of subunit 2 and heme A of subunit 1 to the active site in subunit 1, a binuclear center (BNC) formed by heme A3 and copper B (CU(B)). The BNC reduces molecular oxygen to 2 water molecules using 4 electrons from cytochrome c in the IMS and 4 protons from the mitochondrial matrix. The polypeptide is Cytochrome c oxidase subunit 1 (COI) (Strigomonas oncopelti (Parasitic flagellate)).